Here is a 570-residue protein sequence, read N- to C-terminus: Glutamate--tRNA ligase (570 aa).

The short motif at proline 107–serine 117 is the 'HIGH' region element.

Belongs to the class-I aminoacyl-tRNA synthetase family. Glutamate--tRNA ligase type 2 subfamily.

It is found in the cytoplasm. The catalysed reaction is tRNA(Glu) + L-glutamate + ATP = L-glutamyl-tRNA(Glu) + AMP + diphosphate. Catalyzes the attachment of glutamate to tRNA(Glu) in a two-step reaction: glutamate is first activated by ATP to form Glu-AMP and then transferred to the acceptor end of tRNA(Glu). The protein is Glutamate--tRNA ligase of Pyrobaculum islandicum (strain DSM 4184 / JCM 9189 / GEO3).